The following is a 320-amino-acid chain: uncharacterized protein (320 aa).

This sequence to S.pombe SpAC23H3.12c.

This is an uncharacterized protein from Saccharomyces cerevisiae (strain ATCC 204508 / S288c) (Baker's yeast).